A 546-amino-acid polypeptide reads, in one-letter code: Probable protein kinase UbiB (546 aa).

Residues 124–502 enclose the Protein kinase domain; it reads DFDIQPLASA…HVRQSQSRYL (379 aa). ATP-binding positions include 130–138 and Lys-153; that span reads LASASIAQV. Asp-288 (proton acceptor) is an active-site residue. Transmembrane regions (helical) follow at residues 501–521 and 522–542; these read YLLGIGATLLLSGSFLLVNRP and EWGLMPSWLMVGGVVVWLVGW.

It belongs to the ABC1 family. UbiB subfamily.

It localises to the cell inner membrane. It participates in cofactor biosynthesis; ubiquinone biosynthesis [regulation]. Its function is as follows. Is probably a protein kinase regulator of UbiI activity which is involved in aerobic coenzyme Q (ubiquinone) biosynthesis. This chain is Probable protein kinase UbiB, found in Salmonella gallinarum (strain 287/91 / NCTC 13346).